The primary structure comprises 450 residues: FAD-linked oxidoreductase penO (450 aa).

One can recognise an FAD-binding PCMH-type domain in the interval 32-203 (PPELPYAIVK…TRFFIRTRPA (172 aa)).

The protein belongs to the oxygen-dependent FAD-linked oxidoreductase family. FAD is required as a cofactor.

The protein operates within secondary metabolite biosynthesis. Functionally, FAD-linked oxidoreductase; part of the gene cluster that mediates the biosynthesis of the indole diterpenes penitrems. The geranylgeranyl diphosphate (GGPP) synthase penG catalyzes the first step in penitrem biosynthesis via conversion of farnesyl pyrophosphate and isopentyl pyrophosphate into geranylgeranyl pyrophosphate (GGPP). Condensation of indole-3-glycerol phosphate with GGPP by the prenyl transferase penC then forms 3-geranylgeranylindole (3-GGI). Epoxidation by the FAD-dependent monooxygenase penM leads to a epoxidized-GGI that is substrate of the terpene cyclase penB for cyclization to yield paspaline. Paspaline is subsequently converted to 13-desoxypaxilline by the cytochrome P450 monooxygenase penP, the latter being then converted to paxilline by the cytochrome P450 monooxygenase penQ. Paxilline is converted to beta-paxitriol via C-10 ketoreduction by the short-chain dehydrogenase PC-15 which can be monoprenylated at the C-20 by the indole diterpene prenyltransferase penD. A two-step elimination (acetylation and elimination) process performed by the O-acetyltransferase PC-16 and the P.simplicissimum ptmI-ortholog not yet identified in P.crustosum, leads to the production of the prenylated form of penijanthine. The FAD-linked oxidoreductase ptmO then converts the prenylated form of penijanthine into PC-M5 which is in turn transformed into PC-M4 by the aromatic dimethylallyltransferase PC-22. A series of oxidation steps involving 4 cytochrome P450 monooxygenases (PC-21, PC-05, PC-23, PC-20) and a FAD-dependent monooxygenase (PC-14) are required for the transformation of PC-M4 to penitrems A and E. Synthesis of these final products is proposed to proceed via penitrems D and C (PC-21, PC-05, PC-14) and penitrems B and F (PC-21, PC-05, PC-14, PC-23). This is FAD-linked oxidoreductase penO from Penicillium crustosum (Blue mold fungus).